We begin with the raw amino-acid sequence, 96 residues long: Glutamyl-tRNA(Gln) amidotransferase subunit C (96 aa).

It belongs to the GatC family. In terms of assembly, heterotrimer of A, B and C subunits.

It catalyses the reaction L-glutamyl-tRNA(Gln) + L-glutamine + ATP + H2O = L-glutaminyl-tRNA(Gln) + L-glutamate + ADP + phosphate + H(+). The enzyme catalyses L-aspartyl-tRNA(Asn) + L-glutamine + ATP + H2O = L-asparaginyl-tRNA(Asn) + L-glutamate + ADP + phosphate + 2 H(+). In terms of biological role, allows the formation of correctly charged Asn-tRNA(Asn) or Gln-tRNA(Gln) through the transamidation of misacylated Asp-tRNA(Asn) or Glu-tRNA(Gln) in organisms which lack either or both of asparaginyl-tRNA or glutaminyl-tRNA synthetases. The reaction takes place in the presence of glutamine and ATP through an activated phospho-Asp-tRNA(Asn) or phospho-Glu-tRNA(Gln). In Deinococcus radiodurans (strain ATCC 13939 / DSM 20539 / JCM 16871 / CCUG 27074 / LMG 4051 / NBRC 15346 / NCIMB 9279 / VKM B-1422 / R1), this protein is Glutamyl-tRNA(Gln) amidotransferase subunit C.